A 155-amino-acid chain; its full sequence is Ribosomal RNA large subunit methyltransferase H (155 aa).

Residues Leu-73, Gly-104, and 123–128 (LSPLTL) each bind S-adenosyl-L-methionine.

This sequence belongs to the RNA methyltransferase RlmH family. In terms of assembly, homodimer.

Its subcellular location is the cytoplasm. The catalysed reaction is pseudouridine(1915) in 23S rRNA + S-adenosyl-L-methionine = N(3)-methylpseudouridine(1915) in 23S rRNA + S-adenosyl-L-homocysteine + H(+). In terms of biological role, specifically methylates the pseudouridine at position 1915 (m3Psi1915) in 23S rRNA. The sequence is that of Ribosomal RNA large subunit methyltransferase H from Pseudomonas putida (strain W619).